The sequence spans 664 residues: MKQNIKRNWIWILIVMIVIGIILYFSIRNLFSTKVAEWSISELLNNIERAKENTTDALYFKEITVNPFTNSITGVFNNTDNTSTSFVTYTNLDLLRLSGVASDQGVISKIFTPEVFLTANNVSGSLKSVATPQPNPFLGILISSVPVLILIFVMVWIYRSQVKMMNGQGGAFGGDKGTAQIIKSDKKFTDIAGNKEPIEEISEVVDYLKNPGKYQQSGARMPHGILLGGPPGTGKTLLAKATAGEANVPFYFVSASSFVELFVGMGAKRVRQVISEARKNSPAIIFIDELDAIGRTRGSGIGGGHDEREQTLNQLLVEMDGMKENSGLLFIAATNRTDVLDPALIRPGRFDRIITVGLPDVKEREEILKLHAKGKRFESNVDFANIAKRTPGFSGAQLENVINEAVLLSIREDTKVINLYQIDEAIDRVMSGPAKKSRTITKEELTMVAYHEAGHAVVGIKVPGGNKVQKITIIPRGNAGGYNLMMPENEKYNYSKADLYATIASFMGGRAAEEIIYGDNKISTGAADDIKKATSIARRMVTQFGMSDLGPIEYQSDEGSPFLGKALASNSSLSNQVNHEIELEIRKIIFTAKEQATKIIKQNIELLELIKESLLKKETIVGEEIEYIAKHMKLPPEKIEEKDLSKNSEDNNLDSLIEKTSKKE.

Topologically, residues 1–9 (MKQNIKRNW) are cytoplasmic. Residues 10–30 (IWILIVMIVIGIILYFSIRNL) traverse the membrane as a helical segment. The Extracellular portion of the chain corresponds to 31-136 (FSTKVAEWSI…KSVATPQPNP (106 aa)). A helical transmembrane segment spans residues 137–157 (FLGILISSVPVLILIFVMVWI). At 158 to 664 (YRSQVKMMNG…SLIEKTSKKE (507 aa)) the chain is on the cytoplasmic side. 229–236 (GPPGTGKT) serves as a coordination point for ATP. H451 serves as a coordination point for Zn(2+). E452 is a catalytic residue. The Zn(2+) site is built by H455 and D529. Basic and acidic residues predominate over residues 639 to 649 (IEEKDLSKNSE). The segment at 639–664 (IEEKDLSKNSEDNNLDSLIEKTSKKE) is disordered.

This sequence in the central section; belongs to the AAA ATPase family. In the C-terminal section; belongs to the peptidase M41 family. As to quaternary structure, homohexamer. Zn(2+) serves as cofactor.

It is found in the cell membrane. Acts as a processive, ATP-dependent zinc metallopeptidase for both cytoplasmic and membrane proteins. Plays a role in the quality control of integral membrane proteins. This is ATP-dependent zinc metalloprotease FtsH from Mycoplasmopsis synoviae (strain 53) (Mycoplasma synoviae).